Reading from the N-terminus, the 130-residue chain is Small ribosomal subunit protein uS9 (130 aa).

The protein belongs to the universal ribosomal protein uS9 family.

This is Small ribosomal subunit protein uS9 from Thioalkalivibrio sulfidiphilus (strain HL-EbGR7).